A 132-amino-acid chain; its full sequence is Outer membrane protein assembly factor BamE (132 aa).

The N-terminal stretch at 1–16 is a signal peptide; it reads MQKLVLTLLVTSLLAG. Cys17 carries the N-palmitoyl cysteine lipid modification. Cys17 carries the S-diacylglycerol cysteine lipid modification.

This sequence belongs to the BamE family. In terms of assembly, part of the Bam complex.

The protein localises to the cell outer membrane. Part of the outer membrane protein assembly complex, which is involved in assembly and insertion of beta-barrel proteins into the outer membrane. This Acinetobacter pittii (strain PHEA-2) protein is Outer membrane protein assembly factor BamE.